An 877-amino-acid chain; its full sequence is Valine--tRNA ligase (877 aa).

The short motif at 46–56 is the 'HIGH' region element; sequence PYPTGSIHMGH. Positions 529–533 match the 'KMSKS' region motif; that stretch reads KMSKS. Lys532 contributes to the ATP binding site.

It belongs to the class-I aminoacyl-tRNA synthetase family. ValS type 2 subfamily.

It localises to the cytoplasm. The catalysed reaction is tRNA(Val) + L-valine + ATP = L-valyl-tRNA(Val) + AMP + diphosphate. Catalyzes the attachment of valine to tRNA(Val). As ValRS can inadvertently accommodate and process structurally similar amino acids such as threonine, to avoid such errors, it has a 'posttransfer' editing activity that hydrolyzes mischarged Thr-tRNA(Val) in a tRNA-dependent manner. In Methanothermobacter thermautotrophicus (strain ATCC 29096 / DSM 1053 / JCM 10044 / NBRC 100330 / Delta H) (Methanobacterium thermoautotrophicum), this protein is Valine--tRNA ligase.